The chain runs to 460 residues: Benzyl alcohol O-benzoyltransferase (460 aa).

Catalysis depends on proton acceptor residues histidine 167 and aspartate 382.

The protein belongs to the plant acyltransferase family. In terms of tissue distribution, specifically expressed in flowers, mainly in the limb of flowers corollas, and, at low levels, in roots, stems, sepals and leaves.

It carries out the reaction benzyl alcohol + benzoyl-CoA = benzyl benzoate + CoA. The enzyme catalyses benzyl alcohol + acetyl-CoA = benzyl acetate + CoA. It catalyses the reaction 3-hydroxybenzyl alcohol + acetyl-CoA = 3-hydroxy-benzyl acetate + CoA. The catalysed reaction is 3-hydroxybenzyl alcohol + benzoyl-CoA = 3-hydroxy-benzyl benzoate + CoA. It carries out the reaction 2-phenylethanol + benzoyl-CoA = phenethyl benzoate + CoA. The enzyme catalyses (3Z)-hex-3-en-1-ol + benzoyl-CoA = (3Z)-hex-3-en-1-yl benzoate + CoA. It catalyses the reaction (2E)-geraniol + acetyl-CoA = (2E)-geranyl acetate + CoA. The catalysed reaction is butan-1-ol + benzoyl-CoA = butyl benzoate + CoA. It carries out the reaction (2E)-geraniol + benzoyl-CoA = (2E)-geranyl benzoate + CoA. The enzyme catalyses octan-1-ol + benzoyl-CoA = octyl benzoate + CoA. It functions in the pathway aromatic compound metabolism; benzoyl-CoA degradation. In terms of biological role, involved in the production of volatile organic compounds (VOCs), including floral volatile benzenoids and phenylpropanoids (FVBP), in flowers of fragrant cultivars (e.g. cv. Mitchell and cv. V26), scent attracting pollinators (e.g. the night-active hawkmoth pollinator Manduca sexta). Acyltransferase that catalyzes the transfer of benzoyl and acetyl moieties to a large variety of potential substrate alcohols, and involved in the formation of volatile esters benzyl benzoate and phenylethyl benzoate from benzoyl-CoA. With acetyl-CoA, mainly active on benzyl alcohol, and, to a lower extent, on 3-hydroxybenzyl alcohol, geraniol, and 2-phenylethanol, but barely active on butanol, 1-octanol, 4-hydroxy-benzyl alcohol, 2-hexanol, cis-3-hexen-1-ol and linalool. With benzoyl-CoA, mainly active on benzyl alcohol, but also efficient on several substrates, including 3-hydroxybenzyl alcohol, 2-phenylethanol, geraniol, butanol, cis-3-hexen-1-ol and 1-octanol. In Petunia hybrida (Petunia), this protein is Benzyl alcohol O-benzoyltransferase.